The chain runs to 218 residues: uncharacterized protein (218 aa).

In terms of domain architecture, ABC transporter spans 2 to 216; that stretch reads IEVLNLTKKI…ETSEKVIYKK (215 aa). 34-41 lines the ATP pocket; it reads GSNGSGKT.

The protein belongs to the ABC transporter superfamily.

This is an uncharacterized protein from Bacillus subtilis (strain 168).